Here is a 179-residue protein sequence, read N- to C-terminus: Diphosphoinositol polyphosphate phosphohydrolase 2 (179 aa).

Substrate is bound by residues Arg9, 17–19, and 38–40; these read KKR and SSR. A Nudix hydrolase domain is found at 17–143; sequence KKRAACLCFR…VHAEYLEKLK (127 aa). Residues Gly49 and Glu65 each coordinate Mg(2+). Positions 50-71 match the Nudix box motif; it reads GGMEPEEEPGGAAVREVYEEAG. Residue Glu68 is the Proton acceptor of the active site. Glu69 contributes to the Mg(2+) binding site. Residues 88 to 90, Arg114, and Lys132 contribute to the substrate site; that span reads RKH.

The protein belongs to the Nudix hydrolase family. DIPP subfamily. It depends on Mg(2+) as a cofactor. Mn(2+) is required as a cofactor.

Its subcellular location is the cytoplasm. The catalysed reaction is diphospho-myo-inositol polyphosphate + H2O = myo-inositol polyphosphate + phosphate.. It catalyses the reaction 5-diphospho-1D-myo-inositol 1,2,3,4,6-pentakisphosphate + H2O = 1D-myo-inositol hexakisphosphate + phosphate + H(+). It carries out the reaction 3,5-bis(diphospho)-1D-myo-inositol 1,2,4,6-tetrakisphosphate + H2O = 3-diphospho-1D-myo-inositol 1,2,4,5,6-pentakisphosphate + phosphate + 2 H(+). The enzyme catalyses 5-diphospho-1D-myo-inositol 1,3,4,6-tetrakisphosphate + H2O = 1D-myo-inositol 1,3,4,5,6-pentakisphosphate + phosphate + H(+). The catalysed reaction is P(1),P(6)-bis(5'-adenosyl) hexaphosphate + H2O = 2 ATP + 2 H(+). It catalyses the reaction P(1),P(5)-bis(5'-adenosyl) pentaphosphate + H2O = ADP + ATP + 2 H(+). It carries out the reaction 5-phospho-alpha-D-ribose 1-diphosphate + H2O = alpha-D-ribose 1,5-bisphosphate + phosphate + H(+). Cleaves the beta-phosphate from diphosphoinositol polyphosphates such as PP-InsP5 (diphosphoinositol pentakisphosphate), PP-InsP4 (diphosphoinositol tetrakisphosphate) and [PP]2-InsP4 (bisdiphosphoinositol tetrakisphosphate), suggesting that it may play a role in signal transduction. Diadenosine polyphosphates, particularly Ap6A (P(1),P(6)-bis(5a-adenosyl) hexaphosphate) and Ap5A (P(1),P(5)-bis(5'-adenosyl) pentaphosphate) are downstream effectors of a signaling cascade that regulates cardiac KATP channels, can also be substrates, although with lower preference than the diphosphoinositol polyphosphates. Can also catalyze the hydrolysis of 5-phosphoribose 1-diphosphate, generating the glycolytic activator ribose 1,5-bisphosphate. Does not play a role in U8 snoRNA decapping activity. Binds U8 snoRNA. This Mus musculus (Mouse) protein is Diphosphoinositol polyphosphate phosphohydrolase 2.